The following is a 368-amino-acid chain: Glutamate 5-kinase (368 aa).

K9 lines the ATP pocket. S49, D136, and N148 together coordinate substrate. ATP is bound by residues 168 to 169 (TD) and 210 to 216 (TGGMMTK). The region spanning 275 to 353 (AGIITIDNGA…ADIENVLGYE (79 aa)) is the PUA domain.

This sequence belongs to the glutamate 5-kinase family.

The protein resides in the cytoplasm. It catalyses the reaction L-glutamate + ATP = L-glutamyl 5-phosphate + ADP. It participates in amino-acid biosynthesis; L-proline biosynthesis; L-glutamate 5-semialdehyde from L-glutamate: step 1/2. Catalyzes the transfer of a phosphate group to glutamate to form L-glutamate 5-phosphate. In Haemophilus influenzae (strain PittEE), this protein is Glutamate 5-kinase.